The primary structure comprises 214 residues: ATP phosphoribosyltransferase (214 aa).

Belongs to the ATP phosphoribosyltransferase family. Short subfamily. In terms of assembly, heteromultimer composed of HisG and HisZ subunits.

Its subcellular location is the cytoplasm. It catalyses the reaction 1-(5-phospho-beta-D-ribosyl)-ATP + diphosphate = 5-phospho-alpha-D-ribose 1-diphosphate + ATP. Its pathway is amino-acid biosynthesis; L-histidine biosynthesis; L-histidine from 5-phospho-alpha-D-ribose 1-diphosphate: step 1/9. Functionally, catalyzes the condensation of ATP and 5-phosphoribose 1-diphosphate to form N'-(5'-phosphoribosyl)-ATP (PR-ATP). Has a crucial role in the pathway because the rate of histidine biosynthesis seems to be controlled primarily by regulation of HisG enzymatic activity. The chain is ATP phosphoribosyltransferase from Streptococcus sanguinis (strain SK36).